We begin with the raw amino-acid sequence, 369 residues long: Mitogen-activated protein kinase 4 (369 aa).

The region spanning 32-319 (YVPIKPIGRG…VTEALEHPYM (288 aa)) is the Protein kinase domain. Residues 38-46 (IGRGAYGIV) and Lys-61 contribute to the ATP site. Residue Asp-158 is the Proton acceptor of the active site. Residue Thr-191 is modified to Phosphothreonine. Positions 191–193 (TEY) match the TXY motif. Phosphotyrosine is present on Tyr-193.

Belongs to the protein kinase superfamily. CMGC Ser/Thr protein kinase family. MAP kinase subfamily. In terms of processing, dually phosphorylated on Thr-191 and Tyr-193, which activates the enzyme. Expressed in leaves and panicles.

It carries out the reaction L-seryl-[protein] + ATP = O-phospho-L-seryl-[protein] + ADP + H(+). The catalysed reaction is L-threonyl-[protein] + ATP = O-phospho-L-threonyl-[protein] + ADP + H(+). Activated by threonine and tyrosine phosphorylation. In Oryza sativa subsp. japonica (Rice), this protein is Mitogen-activated protein kinase 4 (MPK4).